We begin with the raw amino-acid sequence, 1191 residues long: MYIKQVIIQGFRSYRDQTIVDPFSSKHNVIVGRNGSGKSNFFYAIQFVLSDEFSHLRPEQRLALLHEGTGPRVISAFVEIIFDNSDNRLPIDKEEVSLRRVIGAKKDQYFLDKKMVTKNDVMNLLESAGFSRSNPYYIVKQGKINQMATAPDSQRLKLLREVAGTRVYDERKEESISLMKETEGKREKINELLKYIEERLHTLEEEKEELAQYQKWDKMRRALEYTIYNQELNETRAKLDELSAKRETSGEKSRQLRDAQQDARDKMEDIERQVRELKTKISAMKEEKEQLSAERQEQIKQRTKLELKAKDLQDELAGNSEQRKRLLKERQKLLEKIEEKQKELAETEPKFNSVKEKEERGIARLAQATQERTDLYAKQGRGSQFTSKEERDKWIKKELKSLDQAINDKKRQIAAIHKDLEDTEANKEKNLEQYNKLDQDLNEVKARVEELDRKYYEVKNKKDELQSERNYLWREENAEQQALAAKREDLEKKQQLLRAATGKAILNGIDSINKVLDHFRRKGINQHVQNGYHGIVMNNFECEPAFYTCVEVTAGNRLFYHIVDSDEVSTKILMEFNKMNLPGEVTFLPLNKLDVRDTAYPETNDAIPMISKLRYNPRFDKAFKHVFGKTLICRSMEVSTQLARAFTMDCITLEGDQVSHRGALTGGYYDTRKSRLELQKDVRKAEEELGELEAKLNENLRRNIERINNEIDQLMNQMQQIETQQRKFKASRDSTLSEMKMLKEKRQQSEKTFMPKQRSLQSLEASLHAMESTRESLKAELGTDLPSQLSLEDQKRVDALNDEIRQLQQKNRQLLNERIKLEGIITRVETYLNENLRKRLDQVEQELNELRETEGGTVLTATTSQLEAINKRVKDTMARSEDLDNSIDKTEAGIKELQKSMERWKNMEKEHMDAINHDTKELEKMTNRQGMLLKKKEECMKKIRELGSLPQEAFEKYQTLSLKQLFRKLEQCNTELKKYSHVNKKALDQFVNFSEQKEKLIKRQEELDRGYKSIMELMNVLELRKYEAIQLTFKQVSKNFSEVFQKLVPGAKATLVMKKGDVEGSQSQDEGEGSGESERGSGSQSSVPSVDQFTGVGIRVSFTGKQGEMREMQQLSGGQKSLVALALIFAIQKCDPAPFYLFDEIDQALDAQHRKAVSDMIMELAVHAQFITTTFRPELLESADKSSGKSE.

32 to 39 (GRNGSGKS) provides a ligand contact to ATP. 3 positions are modified to N6-acetyllysine: lysine 105, lysine 106, and lysine 140. Coiled-coil stretches lie at residues 173 to 357 (EESI…VKEK) and 389 to 504 (EERD…TGKA). Residues 242 to 268 (LSAKRETSGEKSRQLRDAQQDARDKME) form a disordered region. Residues 530-642 (NGYHGIVMNN…CRSMEVSTQL (113 aa)) enclose the SMC hinge domain. A coiled-coil region spans residues 668–1022 (YYDTRKSRLE…SIMELMNVLE (355 aa)). Threonine 783 carries the post-translational modification Phosphothreonine. Serine 787, serine 886, serine 1013, serine 1065, serine 1067, serine 1074, and serine 1083 each carry phosphoserine. Residues 1059–1090 (KGDVEGSQSQDEGEGSGESERGSGSQSSVPSV) are disordered.

This sequence belongs to the SMC family. SMC3 subfamily. In terms of assembly, forms a heterodimer with SMC1A or SMC1B in cohesin complexes. Cohesin complexes are composed of the SMC1 (SMC1A or meiosis-specific SMC1B) and SMC3 heterodimer attached via their SMC hinge domain, RAD21 which link them, and one STAG protein (STAG1, STAG2 or STAG3), which interacts with RAD21. Also found in meiosis-specific cohesin complexes. Found in a complex with SMC1A, CDCA5 and RAD21, PDS5A/SCC-112 and PDS5B/APRIN. Interacts with MXI1, MXD3 and MXD4. Interacts with NUMA1, and forms a ternary complex with KIF3B and KIFAP3, suggesting a function in tethering the chromosomes to the spindle pole and a function in chromosome movement. Interacts with PDS5A and WAPL; regulated by SMC3 acetylation. Interacts (via SMC hinge domain) with KIAA1328 (via N- and C-terminal domains). Interacts with DDX11, RPGR and STAG3. The cohesin complex interacts with the cohesin loading complex subunits NIPBL/Scc2 (via HEAT repeats) and MAU2/Scc4. NIPBL directly contacts all members of the complex, RAD21, SMC1A/B, SMC3 and STAG1. Interacts with SYCP2. Interacts with the NuRD complex component HDAC2; the interaction is direct. Phosphorylated at Ser-1083 in a SPO11-dependent manner. In terms of processing, acetylation at Lys-105 and Lys-106 by ESCO1 is important for genome stability and S phase sister chromatid cohesion. Regulated by DSCC1, it is required for processive DNA synthesis, coupling sister chromatid cohesion establishment during S phase to DNA replication. Deacetylation by HDAC8, regulates release of the cohesin complex from chromatin. Post-translationally, ubiquitinated by the DCX(DCAF15) complex, leading to its degradation. Ubiquitous.

The protein resides in the nucleus. Its subcellular location is the chromosome. The protein localises to the centromere. Central component of cohesin, a complex required for chromosome cohesion during the cell cycle. The cohesin complex may form a large proteinaceous ring within which sister chromatids can be trapped. At anaphase, the complex is cleaved and dissociates from chromatin, allowing sister chromatids to segregate. Cohesion is coupled to DNA replication and is involved in DNA repair. The cohesin complex also plays an important role in spindle pole assembly during mitosis and in chromosomes movement. The sequence is that of Structural maintenance of chromosomes protein 3 (Smc3) from Rattus norvegicus (Rat).